The sequence spans 447 residues: Glutamate-1-semialdehyde 2,1-aminomutase (447 aa).

Residue Lys-277 is modified to N6-(pyridoxal phosphate)lysine.

The protein belongs to the class-III pyridoxal-phosphate-dependent aminotransferase family. HemL subfamily. Homodimer. Requires pyridoxal 5'-phosphate as cofactor.

It is found in the cytoplasm. The enzyme catalyses (S)-4-amino-5-oxopentanoate = 5-aminolevulinate. Its pathway is porphyrin-containing compound metabolism; protoporphyrin-IX biosynthesis; 5-aminolevulinate from L-glutamyl-tRNA(Glu): step 2/2. This Arthrobacter sp. (strain FB24) protein is Glutamate-1-semialdehyde 2,1-aminomutase.